The primary structure comprises 86 residues: MASFLSFLLGEKKQTASVAKERLQIILAHERTGRSHKPDYLPALQRDLIAVIAKYIHINPNDIKLHLERQDNLDVLEVKIELPDAK.

Belongs to the MinE family.

In terms of biological role, prevents the cell division inhibition by proteins MinC and MinD at internal division sites while permitting inhibition at polar sites. This ensures cell division at the proper site by restricting the formation of a division septum at the midpoint of the long axis of the cell. In Polaromonas sp. (strain JS666 / ATCC BAA-500), this protein is Cell division topological specificity factor.